The primary structure comprises 208 residues: MSSLGRLHLITDARAGRNPLTVVQAALSVARTELVVQVRVADDATDRQAYDLARRVIALCARYDATCLVNDRLHVALAVGAAGGHVGADDLPVGAARAVLGSAAVLGVTARDADTAVEAVAAGASYLGVGPVHPTTSKEGLPPAIGVAGVGVVAAAVSVPVIAIGAVTAADVPVLRAAGAYGVAVIGALSHAADPAGATAALLEALTW.

Residues 37–39 and asparagine 70 each bind 4-amino-2-methyl-5-(diphosphooxymethyl)pyrimidine; that span reads QVR. Residues aspartate 71 and aspartate 90 each coordinate Mg(2+). Threonine 109 is a binding site for 4-amino-2-methyl-5-(diphosphooxymethyl)pyrimidine. 135–137 contributes to the 2-[(2R,5Z)-2-carboxy-4-methylthiazol-5(2H)-ylidene]ethyl phosphate binding site; it reads TTS. Lysine 138 is a 4-amino-2-methyl-5-(diphosphooxymethyl)pyrimidine binding site. Alanine 166 contacts 2-[(2R,5Z)-2-carboxy-4-methylthiazol-5(2H)-ylidene]ethyl phosphate.

It belongs to the thiamine-phosphate synthase family. It depends on Mg(2+) as a cofactor.

The catalysed reaction is 2-[(2R,5Z)-2-carboxy-4-methylthiazol-5(2H)-ylidene]ethyl phosphate + 4-amino-2-methyl-5-(diphosphooxymethyl)pyrimidine + 2 H(+) = thiamine phosphate + CO2 + diphosphate. The enzyme catalyses 2-(2-carboxy-4-methylthiazol-5-yl)ethyl phosphate + 4-amino-2-methyl-5-(diphosphooxymethyl)pyrimidine + 2 H(+) = thiamine phosphate + CO2 + diphosphate. It carries out the reaction 4-methyl-5-(2-phosphooxyethyl)-thiazole + 4-amino-2-methyl-5-(diphosphooxymethyl)pyrimidine + H(+) = thiamine phosphate + diphosphate. It participates in cofactor biosynthesis; thiamine diphosphate biosynthesis; thiamine phosphate from 4-amino-2-methyl-5-diphosphomethylpyrimidine and 4-methyl-5-(2-phosphoethyl)-thiazole: step 1/1. Functionally, condenses 4-methyl-5-(beta-hydroxyethyl)thiazole monophosphate (THZ-P) and 2-methyl-4-amino-5-hydroxymethyl pyrimidine pyrophosphate (HMP-PP) to form thiamine monophosphate (TMP). The protein is Thiamine-phosphate synthase of Salinispora tropica (strain ATCC BAA-916 / DSM 44818 / JCM 13857 / NBRC 105044 / CNB-440).